The chain runs to 873 residues: Actin-related protein 8 (873 aa).

Positions 108–129 (DEQVKPTSSTSSTSTTEEVEIK) are disordered. Residues 114–123 (TSSTSSTSTT) show a composition bias toward low complexity. 368–371 (DLGH) serves as a coordination point for ATP. Over residues 596-650 (NNNNNNNNSSSSSNNNNNNNNSGSNSNINSYNNNNNNNNNNNNNNNNNNNNSFNN) the composition is skewed to low complexity. Residues 596–701 (NNNNNNNNSS…TSSPTKKLKI (106 aa)) form a disordered region. The span at 651-668 (VTIVTSTLNSNSTVPSTL) shows a compositional bias: polar residues. Residues 669 to 696 (NSNSTVPSISNSNSTVPSTSTSTTSSPT) are compositionally biased toward low complexity. Residues 762-804 (FKQLEQQYQAQQLQFQQQLQQQQQQQQQLQQQLQNSTNSATTT) are a coiled coil.

It belongs to the actin family. ARP8 subfamily. As to quaternary structure, component of the chromatin remodeling INO80 complex. Exists as monomers and dimers, but the dimer is most probably the biologically relevant form required for stable interactions with histones that exploits the twofold symmetry of the nucleosome core.

The protein resides in the nucleus. It is found in the cytoplasm. It localises to the cytoskeleton. In terms of biological role, plays an important role in the functional organization of mitotic chromosomes. Exhibits low basal ATPase activity, and unable to polymerize. Functionally, proposed core component of the chromatin remodeling INO80 complex which is involved in transcriptional regulation, DNA replication and probably DNA repair. Strongly prefer nucleosomes and H3-H4 tetramers over H2A-H2B dimers, suggesting it may act as a nucleosome recognition module within the complex. This chain is Actin-related protein 8, found in Dictyostelium discoideum (Social amoeba).